A 319-amino-acid polypeptide reads, in one-letter code: Probable NAD(P)H-dependent D-xylose reductase xyl1 (319 aa).

Tyr-50 acts as the Proton donor in catalysis. His-112 provides a ligand contact to substrate. Residues 166–167, 215–224, and 271–281 contribute to the NAD(+) site; these read SN, SSFGPLSFLE, and KSNNPTRLSQN.

The protein belongs to the aldo/keto reductase family.

The enzyme catalyses xylitol + NAD(+) = D-xylose + NADH + H(+). The catalysed reaction is xylitol + NADP(+) = D-xylose + NADPH + H(+). It participates in carbohydrate metabolism; D-xylose degradation. Catalyzes the initial reaction in the xylose utilization pathway by reducing D-xylose into xylitol. Xylose is a major component of hemicelluloses such as xylan. Most fungi utilize D-xylose via three enzymatic reactions, xylose reductase (XR), xylitol dehydrogenase (XDH), and xylulokinase, to form xylulose 5-phosphate, which enters pentose phosphate pathway. The polypeptide is Probable NAD(P)H-dependent D-xylose reductase xyl1 (xyl1) (Aspergillus oryzae (strain ATCC 42149 / RIB 40) (Yellow koji mold)).